Reading from the N-terminus, the 437-residue chain is Gamma-glutamyl phosphate reductase (437 aa).

This sequence belongs to the gamma-glutamyl phosphate reductase family.

It is found in the cytoplasm. It catalyses the reaction L-glutamate 5-semialdehyde + phosphate + NADP(+) = L-glutamyl 5-phosphate + NADPH + H(+). The protein operates within amino-acid biosynthesis; L-proline biosynthesis; L-glutamate 5-semialdehyde from L-glutamate: step 2/2. Its function is as follows. Catalyzes the NADPH-dependent reduction of L-glutamate 5-phosphate into L-glutamate 5-semialdehyde and phosphate. The product spontaneously undergoes cyclization to form 1-pyrroline-5-carboxylate. The sequence is that of Gamma-glutamyl phosphate reductase from Synechococcus sp. (strain CC9902).